Reading from the N-terminus, the 197-residue chain is Ribonuclease HII (197 aa).

The 191-residue stretch at 7 to 197 (LGIAGVDEVG…SFLRKLFATV (191 aa)) folds into the RNase H type-2 domain. A divalent metal cation is bound by residues D13, E14, and D109.

The protein belongs to the RNase HII family. Requires Mn(2+) as cofactor. The cofactor is Mg(2+).

Its subcellular location is the cytoplasm. It carries out the reaction Endonucleolytic cleavage to 5'-phosphomonoester.. Its function is as follows. Endonuclease that specifically degrades the RNA of RNA-DNA hybrids. The chain is Ribonuclease HII from Synechococcus sp. (strain CC9311).